Reading from the N-terminus, the 284-residue chain is 4-diphosphocytidyl-2-C-methyl-D-erythritol kinase (284 aa).

The active site involves lysine 17. 100 to 110 lines the ATP pocket; the sequence is PMGGGLGGGSS. Aspartate 142 is a catalytic residue.

Belongs to the GHMP kinase family. IspE subfamily.

The enzyme catalyses 4-CDP-2-C-methyl-D-erythritol + ATP = 4-CDP-2-C-methyl-D-erythritol 2-phosphate + ADP + H(+). Its pathway is isoprenoid biosynthesis; isopentenyl diphosphate biosynthesis via DXP pathway; isopentenyl diphosphate from 1-deoxy-D-xylulose 5-phosphate: step 3/6. In terms of biological role, catalyzes the phosphorylation of the position 2 hydroxy group of 4-diphosphocytidyl-2C-methyl-D-erythritol. This Aromatoleum aromaticum (strain DSM 19018 / LMG 30748 / EbN1) (Azoarcus sp. (strain EbN1)) protein is 4-diphosphocytidyl-2-C-methyl-D-erythritol kinase.